Here is a 354-residue protein sequence, read N- to C-terminus: Probable L-ascorbate-6-phosphate lactonase UlaG (354 aa).

This sequence belongs to the UlaG family. A divalent metal cation is required as a cofactor.

Its subcellular location is the cytoplasm. The enzyme catalyses L-ascorbate 6-phosphate + H2O = 3-dehydro-L-gulonate 6-phosphate. Its pathway is cofactor degradation; L-ascorbate degradation; D-xylulose 5-phosphate from L-ascorbate: step 1/4. Functionally, probably catalyzes the hydrolysis of L-ascorbate-6-P into 3-keto-L-gulonate-6-P. Is essential for L-ascorbate utilization under anaerobic conditions. The protein is Probable L-ascorbate-6-phosphate lactonase UlaG of Salmonella choleraesuis (strain SC-B67).